We begin with the raw amino-acid sequence, 582 residues long: Putative phospholipase B-like 2 (582 aa).

An N-terminal signal peptide occupies residues 1 to 42 (MTRLIRSKKQFLIRSLHSVFYYLGSLLHSTFEMNVFIGLLLA). N-linked (GlcNAc...) asparagine glycans are attached at residues Asn91, Asn141, Asn178, Asn224, and Asn318. Cys139 and Cys146 form a disulfide bridge. Cys480 and Cys482 form a disulfide bridge. Asn502 is a glycosylation site (N-linked (GlcNAc...) asparagine).

Belongs to the phospholipase B-like family.

The protein localises to the secreted. In terms of biological role, putative phospholipase. The sequence is that of Putative phospholipase B-like 2 from Caenorhabditis elegans.